A 120-amino-acid polypeptide reads, in one-letter code: Peptidyl-tRNA hydrolase (120 aa).

It belongs to the PTH2 family.

The protein resides in the cytoplasm. The enzyme catalyses an N-acyl-L-alpha-aminoacyl-tRNA + H2O = an N-acyl-L-amino acid + a tRNA + H(+). Functionally, the natural substrate for this enzyme may be peptidyl-tRNAs which drop off the ribosome during protein synthesis. In Saccharolobus islandicus (strain Y.N.15.51 / Yellowstone #2) (Sulfolobus islandicus), this protein is Peptidyl-tRNA hydrolase.